The chain runs to 380 residues: Cytochrome b (380 aa).

Helical transmembrane passes span 34–54 (FGSL…LLAT), 78–99 (WLIR…YLHI), 114–134 (WNTG…GYVL), and 179–199 (FFAL…IHLT). Residues histidine 84 and histidine 98 each contribute to the heme b site. Positions 183 and 197 each coordinate heme b. Histidine 202 contributes to the a ubiquinone binding site. A run of 4 helical transmembrane segments spans residues 227–247 (LKDT…ALFS), 289–309 (LGGV…PLLH), 321–341 (FSQF…WVGS), and 348–368 (FIII…ILLP).

It belongs to the cytochrome b family. In terms of assembly, the cytochrome bc1 complex contains 11 subunits: 3 respiratory subunits (MT-CYB, CYC1 and UQCRFS1), 2 core proteins (UQCRC1 and UQCRC2) and 6 low-molecular weight proteins (UQCRH/QCR6, UQCRB/QCR7, UQCRQ/QCR8, UQCR10/QCR9, UQCR11/QCR10 and a cleavage product of UQCRFS1). This cytochrome bc1 complex then forms a dimer. Heme b is required as a cofactor.

It localises to the mitochondrion inner membrane. Its function is as follows. Component of the ubiquinol-cytochrome c reductase complex (complex III or cytochrome b-c1 complex) that is part of the mitochondrial respiratory chain. The b-c1 complex mediates electron transfer from ubiquinol to cytochrome c. Contributes to the generation of a proton gradient across the mitochondrial membrane that is then used for ATP synthesis. The polypeptide is Cytochrome b (MT-CYB) (Garrodia nereis (Grey-backed storm-petrel)).